We begin with the raw amino-acid sequence, 25 residues long: Neuromedin-U-25 (25 aa).

Residue N25 is modified to Asparagine amide.

This sequence belongs to the NmU family.

It localises to the secreted. Stimulates uterine smooth muscle contraction and causes selective vasoconstriction. The protein is Neuromedin-U-25 of Rana temporaria (European common frog).